A 126-amino-acid chain; its full sequence is MIVGLGTDIAEIERVEKALARSGENFARRILTDSELEQFHASKQQGRFLAKRFAAKEAASKALGTGIAQGVTFHDFTISHDKLGKPLLILSGQAAELASQLQVENIHLSISDERHYAMATVILERR.

2 residues coordinate Mg(2+): Asp8 and Glu57.

This sequence belongs to the P-Pant transferase superfamily. AcpS family. The cofactor is Mg(2+).

It is found in the cytoplasm. The enzyme catalyses apo-[ACP] + CoA = holo-[ACP] + adenosine 3',5'-bisphosphate + H(+). Its function is as follows. Transfers the 4'-phosphopantetheine moiety from coenzyme A to a Ser of acyl-carrier-protein. This chain is Holo-[acyl-carrier-protein] synthase, found in Vibrio cholerae serotype O1 (strain ATCC 39315 / El Tor Inaba N16961).